The primary structure comprises 292 residues: Alpha-soluble NSF attachment protein (292 aa).

The protein belongs to the SNAP family.

Its subcellular location is the cytoplasmic vesicle. It is found in the membrane. Required for vesicular transport between the endoplasmic reticulum and the Golgi apparatus. Also between the endosome and phagosome. This chain is Alpha-soluble NSF attachment protein, found in Drosophila melanogaster (Fruit fly).